Here is a 595-residue protein sequence, read N- to C-terminus: NADH-quinone oxidoreductase subunit C/D (595 aa).

The NADH dehydrogenase I subunit C stretch occupies residues Met1 to Gln186. Residues Asp210–Arg595 are NADH dehydrogenase I subunit D.

The protein in the N-terminal section; belongs to the complex I 30 kDa subunit family. It in the C-terminal section; belongs to the complex I 49 kDa subunit family. In terms of assembly, NDH-1 is composed of 13 different subunits. Subunits NuoB, CD, E, F, and G constitute the peripheral sector of the complex.

It is found in the cell inner membrane. The enzyme catalyses a quinone + NADH + 5 H(+)(in) = a quinol + NAD(+) + 4 H(+)(out). Functionally, NDH-1 shuttles electrons from NADH, via FMN and iron-sulfur (Fe-S) centers, to quinones in the respiratory chain. The immediate electron acceptor for the enzyme in this species is believed to be ubiquinone. Couples the redox reaction to proton translocation (for every two electrons transferred, four hydrogen ions are translocated across the cytoplasmic membrane), and thus conserves the redox energy in a proton gradient. This Acinetobacter baylyi (strain ATCC 33305 / BD413 / ADP1) protein is NADH-quinone oxidoreductase subunit C/D.